Here is a 131-residue protein sequence, read N- to C-terminus: Large ribosomal subunit protein bL17 (131 aa).

This sequence belongs to the bacterial ribosomal protein bL17 family. In terms of assembly, part of the 50S ribosomal subunit. Contacts protein L32.

The sequence is that of Large ribosomal subunit protein bL17 from Sodalis glossinidius (strain morsitans).